The following is a 226-amino-acid chain: 7-cyano-7-deazaguanine synthase (226 aa).

Tyr-9–Leu-19 lines the ATP pocket. Zn(2+) is bound by residues Cys-189, Cys-199, Cys-202, and Cys-205.

The protein belongs to the QueC family. It depends on Zn(2+) as a cofactor.

It catalyses the reaction 7-carboxy-7-deazaguanine + NH4(+) + ATP = 7-cyano-7-deazaguanine + ADP + phosphate + H2O + H(+). It participates in purine metabolism; 7-cyano-7-deazaguanine biosynthesis. Its function is as follows. Catalyzes the ATP-dependent conversion of 7-carboxy-7-deazaguanine (CDG) to 7-cyano-7-deazaguanine (preQ(0)). The protein is 7-cyano-7-deazaguanine synthase of Pelobacter propionicus (strain DSM 2379 / NBRC 103807 / OttBd1).